An 86-amino-acid polypeptide reads, in one-letter code: Electron transfer flavoprotein regulatory factor 1 (86 aa).

It belongs to the complex I LYR family.

The protein resides in the mitochondrion. In terms of biological role, acts as a regulator of the electron transfer flavoprotein by promoting the removal of flavin from the ETF holoenzyme (composed of ETFA and ETFB). The chain is Electron transfer flavoprotein regulatory factor 1 from Taeniopygia guttata (Zebra finch).